Consider the following 490-residue polypeptide: 23S rRNA (uracil(1939)-C(5))-methyltransferase RlmD (490 aa).

A TRAM domain is found at 14 to 75 (APAPAEYPID…SSFEKATLTA (62 aa)). Cys88, Cys98, Cys101, and Cys180 together coordinate [4Fe-4S] cluster. The S-adenosyl-L-methionine site is built by Gln289, Phe318, Asn323, Glu339, Asn374, and Asp395. Catalysis depends on Cys446, which acts as the Nucleophile.

Belongs to the class I-like SAM-binding methyltransferase superfamily. RNA M5U methyltransferase family. RlmD subfamily.

The enzyme catalyses uridine(1939) in 23S rRNA + S-adenosyl-L-methionine = 5-methyluridine(1939) in 23S rRNA + S-adenosyl-L-homocysteine + H(+). Its function is as follows. Catalyzes the formation of 5-methyl-uridine at position 1939 (m5U1939) in 23S rRNA. The chain is 23S rRNA (uracil(1939)-C(5))-methyltransferase RlmD from Polaromonas naphthalenivorans (strain CJ2).